The chain runs to 483 residues: NADH-quinone oxidoreductase subunit N (483 aa).

Transmembrane regions (helical) follow at residues 11–31, 37–57, 82–100, 110–130, 164–184, 205–225, 239–259, 268–288, 301–321, 329–349, 372–392, 406–426, and 446–466; these read ALPEIIILCMAMFVLLLDLFL, SLIYIFTQLGLAAAAVVTACT, LMMYLTTSVMLVYTRQYVS, FALTLFALLGMMIMVSGQHFL, FVLGALSSGMLLYGMSMLYGV, AVLVLGVVFLIAGLGFKLGAV, PTAVTLFIGSVTKLAAFAFMI, VLAIDWQGMLAIMAVLSILIG, MLAYSTISHVGYLLYGFMSAG, MFYIMAYVLMTLGGFGIMLLL, YAFLMLIIMFSMAGVPPTLGF, GFVGLVIFAVVMAAIGGFYYL, and PIDMKVLLSLNALLLLALGMF.

The protein belongs to the complex I subunit 2 family. NDH-1 is composed of 14 different subunits. Subunits NuoA, H, J, K, L, M, N constitute the membrane sector of the complex.

It is found in the cell inner membrane. The enzyme catalyses a quinone + NADH + 5 H(+)(in) = a quinol + NAD(+) + 4 H(+)(out). Functionally, NDH-1 shuttles electrons from NADH, via FMN and iron-sulfur (Fe-S) centers, to quinones in the respiratory chain. The immediate electron acceptor for the enzyme in this species is believed to be ubiquinone. Couples the redox reaction to proton translocation (for every two electrons transferred, four hydrogen ions are translocated across the cytoplasmic membrane), and thus conserves the redox energy in a proton gradient. This Methylovorus glucosotrophus (strain SIP3-4) protein is NADH-quinone oxidoreductase subunit N.